The chain runs to 484 residues: tRNA sulfurtransferase (484 aa).

The THUMP domain maps to 63–167 (EAFADRLSCI…RENLYLVVNR (105 aa)). Residues 185–186 (LI), lysine 267, glycine 289, and glutamine 298 each bind ATP. A disulfide bond links cysteine 346 and cysteine 458. One can recognise a Rhodanese domain in the interval 406–484 (VNSNEVIIDV…GYENVKVYRP (79 aa)). Catalysis depends on cysteine 458, which acts as the Cysteine persulfide intermediate.

This sequence belongs to the ThiI family.

The protein resides in the cytoplasm. The catalysed reaction is [ThiI sulfur-carrier protein]-S-sulfanyl-L-cysteine + a uridine in tRNA + 2 reduced [2Fe-2S]-[ferredoxin] + ATP + H(+) = [ThiI sulfur-carrier protein]-L-cysteine + a 4-thiouridine in tRNA + 2 oxidized [2Fe-2S]-[ferredoxin] + AMP + diphosphate. It catalyses the reaction [ThiS sulfur-carrier protein]-C-terminal Gly-Gly-AMP + S-sulfanyl-L-cysteinyl-[cysteine desulfurase] + AH2 = [ThiS sulfur-carrier protein]-C-terminal-Gly-aminoethanethioate + L-cysteinyl-[cysteine desulfurase] + A + AMP + 2 H(+). The protein operates within cofactor biosynthesis; thiamine diphosphate biosynthesis. In terms of biological role, catalyzes the ATP-dependent transfer of a sulfur to tRNA to produce 4-thiouridine in position 8 of tRNAs, which functions as a near-UV photosensor. Also catalyzes the transfer of sulfur to the sulfur carrier protein ThiS, forming ThiS-thiocarboxylate. This is a step in the synthesis of thiazole, in the thiamine biosynthesis pathway. The sulfur is donated as persulfide by IscS. This chain is tRNA sulfurtransferase, found in Shewanella sediminis (strain HAW-EB3).